The primary structure comprises 633 residues: Chaperone protein HtpG (633 aa).

The segment at 1–341 (MTAPHETMSF…SADLPLNVSR (341 aa)) is a; substrate-binding. Residues 342-562 (ELLQESRDVK…DGDMSGYLQR (221 aa)) are b. A c region spans residues 563-633 (LLKQAGQKAP…YVQRVNRLLA (71 aa)).

Belongs to the heat shock protein 90 family. In terms of assembly, homodimer.

Its subcellular location is the cytoplasm. Functionally, molecular chaperone. Has ATPase activity. The sequence is that of Chaperone protein HtpG from Cupriavidus metallidurans (strain ATCC 43123 / DSM 2839 / NBRC 102507 / CH34) (Ralstonia metallidurans).